We begin with the raw amino-acid sequence, 672 residues long: uncharacterized protein (672 aa).

The N-terminal stretch at 1 to 24 (MKTLKTLKIFIIICIASVSLASFA) is a signal peptide. The next 6 membrane-spanning stretches (helical) occupy residues 226 to 246 (IIGAALILYTMFFAFNMALNK), 254 to 274 (IALFVIKFLLVAYFSIGLGPL), 410 to 430 (IILAAGLVFSVIFLSILLYFI), 436 to 456 (CMITIYVMTYISPIFIPMALF), 469 to 489 (VCISCALQPAVVAGFIALLIT), and 562 to 582 (VVSILAELLCVLVFSVIFYYF). The interval 626–672 (ASQGKPSVGDKPDVGGKRKEGEQQGGDSESGAGGGLADLASGSGGGK) is disordered. A compositionally biased stretch (basic and acidic residues) spans 633–647 (VGDKPDVGGKRKEGE). The segment covering 656–672 (GAGGGLADLASGSGGGK) has biased composition (gly residues).

This sequence belongs to the TrbL/VirB6 family.

It is found in the cell membrane. This is an uncharacterized protein from Rickettsia felis (strain ATCC VR-1525 / URRWXCal2) (Rickettsia azadi).